A 123-amino-acid chain; its full sequence is Guanine nucleotide exchange factor MSS4 (123 aa).

Met-1 carries the post-translational modification N-acetylmethionine. The MSS4 domain occupies 9 to 123 (ELVSAEGRNR…YVALERVSHE (115 aa)). Positions 23, 26, 94, and 97 each coordinate Zn(2+).

This sequence belongs to the DSS4/MSS4 family. Interacts with RAB8A. As to expression, ubiquitous.

In terms of biological role, guanine-nucleotide-releasing protein that acts on members of the SEC4/YPT1/RAB subfamily. Stimulates GDP release from both YPT1, RAB3A and RAB10, but is less active on these proteins than on the SEC4 protein. Might play a general role in vesicular transport. The chain is Guanine nucleotide exchange factor MSS4 (RABIF) from Homo sapiens (Human).